The chain runs to 1170 residues: WD repeat-containing protein 35 (1170 aa).

WD repeat units follow at residues 12-51 (PNNVKLKCISWNKDQGFIACGGEDGLLKVLRLETQTDDSK), 69-108 (GHSGAVQVVTWNEQYQKLTTSDQNGLIIVWMLYKGSWYEE), 113-152 (RNKSVVRSMSWNADGQKICIVYEDGAVIVGSVDGNRIWGK), 154-193 (LKGIQLCHVTWSADSKILLFGMANGEIHIYDNQGNFIMKM), and 491-528 (GTRDPICAITASDKTLIVGRESGVIQRYSFPNVALIQK).

In terms of assembly, component of the IFT complex A (IFT-A) complex. IFT-A complex is divided into a core subcomplex composed of IFT122:IFT140:WDR19 which is associated with TULP3 and a peripheral subcomplex composed of IFT43:WDR35:TTC21B. Interacts directy with IFT122, ITF43 and TTC21B. Interacts with IFT43. Interacts with CFAP61. In terms of tissue distribution, expressed at high levels in testis and at lower levels in the brain (at protein level). Also present in other tissues, including heart, uterus, spinal cord, ovary, liver, kidney, lung, pancreas and stomach.

The protein resides in the cytoplasm. Its subcellular location is the cytoskeleton. It localises to the microtubule organizing center. It is found in the centrosome. The protein localises to the cilium axoneme. The protein resides in the cilium basal body. Functionally, as a component of the IFT complex A (IFT-A), a complex required for retrograde ciliary transport and entry into cilia of G protein-coupled receptors (GPCRs), it is involved in ciliogenesis and ciliary protein trafficking. May promote CASP3 activation and TNF-stimulated apoptosis. This chain is WD repeat-containing protein 35 (Wdr35), found in Rattus norvegicus (Rat).